The primary structure comprises 886 residues: Kinesin-like protein KIF18A (886 aa).

The 345-residue stretch at 11-355 (RMKVVVRVRP…LKYANRAKEI (345 aa)) folds into the Kinesin motor domain. A Glycyl lysine isopeptide (Lys-Gly) (interchain with G-Cter in SUMO2) cross-link involves residue Lys24. Residue 113 to 120 (GATGSGKT) participates in ATP binding. Residues 370-404 (ISQYVKICNMQKAEILMLKEKLKAYEEQKALSDRN) adopt a coiled-coil conformation. A Phosphoserine modification is found at Ser674. A Glycyl lysine isopeptide (Lys-Gly) (interchain with G-Cter in SUMO2) cross-link involves residue Lys683. Ser695 bears the Phosphoserine mark. The disordered stretch occupies residues 774 to 804 (EQEPLASSKSSVHRIESSSFSTKDSMPESAG). A Glycyl lysine isopeptide (Lys-Gly) (interchain with G-Cter in SUMO2) cross-link involves residue Lys782. Ser826 carries the phosphoserine modification. Lys862 participates in a covalent cross-link: Glycyl lysine isopeptide (Lys-Gly) (interchain with G-Cter in SUMO2). The tract at residues 862–886 (KRNTNKTNSNMLRKFRRNTSKENVQ) is disordered.

The protein belongs to the TRAFAC class myosin-kinesin ATPase superfamily. Kinesin family. As to quaternary structure, interacts with CENPE and ESR1. Post-translationally, glycosylated. In terms of processing, ubiquitinated.

The protein localises to the cell projection. It is found in the ruffle. It localises to the cytoplasm. The protein resides in the nucleus. Its subcellular location is the cytoskeleton. The protein localises to the microtubule organizing center. It is found in the centrosome. Microtubule-depolymerizing kinesin which plays a role in chromosome congression by reducing the amplitude of preanaphase oscillations and slowing poleward movement during anaphase, thus suppressing chromosome movements. May stabilize the CENPE-BUB1B complex at the kinetochores during early mitosis and maintains CENPE levels at kinetochores during chromosome congression. This chain is Kinesin-like protein KIF18A (Kif18a), found in Mus musculus (Mouse).